A 225-amino-acid chain; its full sequence is NAD(P)H-quinone oxidoreductase subunit K, chloroplastic (225 aa).

[4Fe-4S] cluster contacts are provided by Cys-43, Cys-44, Cys-108, and Cys-139.

It belongs to the complex I 20 kDa subunit family. NDH is composed of at least 16 different subunits, 5 of which are encoded in the nucleus. [4Fe-4S] cluster is required as a cofactor.

It is found in the plastid. It localises to the chloroplast thylakoid membrane. It carries out the reaction a plastoquinone + NADH + (n+1) H(+)(in) = a plastoquinol + NAD(+) + n H(+)(out). The catalysed reaction is a plastoquinone + NADPH + (n+1) H(+)(in) = a plastoquinol + NADP(+) + n H(+)(out). Functionally, NDH shuttles electrons from NAD(P)H:plastoquinone, via FMN and iron-sulfur (Fe-S) centers, to quinones in the photosynthetic chain and possibly in a chloroplast respiratory chain. The immediate electron acceptor for the enzyme in this species is believed to be plastoquinone. Couples the redox reaction to proton translocation, and thus conserves the redox energy in a proton gradient. The protein is NAD(P)H-quinone oxidoreductase subunit K, chloroplastic of Manihot esculenta (Cassava).